Reading from the N-terminus, the 246-residue chain is Probable transcriptional regulatory protein ACP_0521 (246 aa).

The protein belongs to the TACO1 family.

The protein localises to the cytoplasm. The protein is Probable transcriptional regulatory protein ACP_0521 of Acidobacterium capsulatum (strain ATCC 51196 / DSM 11244 / BCRC 80197 / JCM 7670 / NBRC 15755 / NCIMB 13165 / 161).